The sequence spans 506 residues: MGSESSLVHVFLVSFPGQGHVNPLLRLGKRLASKGLLVTFTTPESIGKQMRKASNISDQPAPVGDGFIRFEFFEDGWDEDEPRRQDLDQYLPQLEKVGKVLIPQMIQKNAEQGRPVSCLINNPFIPWVSDVAETLGLPSAMLWVQSCACFLAYYHYYHGLVPFPSENAMEIDVQLPSMPLLKHDEVPSFLYPTTPYPFLRRAILGQYKNLEKPFCILMDTFQELEHEIIEYTSKICPIKTVGPLFKNPKAPNTTVKGDFMKADDCIGWLDSKPASSVVYVSFGSVVYLKQDQWDEIAYGLLNSGVNFLWVMKPPHKDSGYTVLTLPEGFLEKAGDRGKVVQWSPQEQVLAHPATACFVTHCGWNSSMEALTSGMPVVAFPQWGDQVTDAKYLVDEFKVGVRMCRGEAEDKLITRDVVEQCLREATQGPKAAEMKKNALKWKAAAEASFVEGGSSDRNLQAFVDEVKRRSIEITASKPAVKAAPNGVVAAAESVVETKANGKVELAA.

H20 acts as the Proton acceptor in catalysis. H20 provides a ligand contact to an anthocyanidin. UDP-alpha-D-glucose contacts are provided by Q345, H360, W363, N364, S365, and E368. An an anthocyanidin-binding site is contributed by G383. UDP-alpha-D-glucose-binding residues include D384 and Q385.

It belongs to the UDP-glycosyltransferase family. Expressed in roots of the seedlings.

The protein localises to the cytoplasm. It catalyses the reaction 3,4,5-trihydroxybenzoate + UDP-alpha-D-glucose = 1-O-galloyl-beta-D-glucose + UDP. It carries out the reaction 3,4-dihydroxybenzoate + UDP-alpha-D-glucose = 1-O-(3,4-dihydroxy-benzoyl)-beta-D-glucose + UDP. The enzyme catalyses 4-hydroxybenzoate + UDP-alpha-D-glucose = 4-(beta-D-glucosyloxy)benzoate + UDP + H(+). The catalysed reaction is (E)-cinnamate + UDP-alpha-D-glucose = 1-O-(trans-cinnamoyl)-beta-D-glucose + UDP. It catalyses the reaction (E)-sinapate + UDP-alpha-D-glucose = 1-O-(trans-sinapoyl)-beta-D-glucose + UDP. It carries out the reaction (E)-4-coumarate + UDP-alpha-D-glucose = 1-O-(trans-4-coumaroyl)-beta-D-glucose + UDP. The enzyme catalyses (E)-caffeate + UDP-alpha-D-glucose = 1-O-[(E)-caffeoyl]-beta-D-glucose + UDP. The catalysed reaction is (E)-ferulate + UDP-alpha-D-glucose = 1-O-[(E)-feruloyl]-beta-D-glucose + UDP. It catalyses the reaction genistein + UDP-alpha-D-glucose = genistein 7-O-beta-D-glucoside + UDP + H(+). It carries out the reaction apigenin + UDP-alpha-D-glucose = apigenin 7-O-beta-D-glucoside + UDP + H(+). The enzyme catalyses luteolin + UDP-alpha-D-glucose = luteolin 7-O-beta-D-glucoside + UDP + H(+). In terms of biological role, glucosyltransferase that catalyzes the formation of 1-O-beta-D-glucose esters with hydroxybenzoic acids and cinnamic acid including its derivatives as preferred glucosyl acceptors. Has significant activity with gallic acid (3,4,5-trihydroxybenzoic acid), 3,4-dihydroxybenzoic acid, 4-hydroxybenzoic acid, cinnamic acid, sinapic acid, coumaric acid, caffeic acid and ferulic acid in vitro. Gallic acid is the predicted native substrate of the enzyme, which thus catalyzes the formation of 1-O-galloyl-beta-D-glucose, the first committed step of hydrolyzable tannins (HTs) biosynthesis, with punicalagin isomers being the major HTs of pomegranate. Catalyzes the formation of flavonoid glucosides with genistein, apigenin and luteolin in vitro. Has low activity with benzoic acid, 2-hydroxybenzoic acid, 3-hydroxybenzoic acid, 2,4-dihydroxybenzoic acid, naringenin and quercetin. No activity with catechol, resveratrol, chlorogenic acid, catechin and epicatechin (building blocks of proanthocyanidins) or cyanidin, delphinidin and pelargonidin (the three anthocyanidins). The protein is Gallate 1-beta-glucosyltransferase 84A23 of Punica granatum (Pomegranate).